A 149-amino-acid chain; its full sequence is MKKIIKLSLLSLSIAGLASCSTLGLGGSDDAKASAKDTAAAQTATTEQAAAVSKPTAKVSLNKLGQDKIKATVYTAYNNNPQGSVRLQWQAPEGSKCHDTSFPITKYAEKNDKTWATVTVKQGNNFCSGKWTANVVYDKEVIASDSINI.

The N-terminal stretch at 1-19 (MKKIIKLSLLSLSIAGLAS) is a signal peptide. Cys-20 is lipidated: N-palmitoyl cysteine. A lipid anchor (S-diacylglycerol cysteine) is attached at Cys-20.

Its subcellular location is the cell outer membrane. The sequence is that of 17 kDa major membrane protein from Francisella tularensis subsp. holarctica (strain LVS).